Here is a 412-residue protein sequence, read N- to C-terminus: Protein MITOFERRINLIKE 1, chloroplastic (412 aa).

The transit peptide at 1–92 (MEARLSETLG…PGPEFLKWIK (92 aa)) directs the protein to the chloroplast. The segment at 43–83 (VRNPKLKTKSSQKPPKFSANFRRSDPPFASTSISDPTHEKP) is disordered. Solcar repeat units lie at residues 112–198 (ERAI…GKSL), 206–288 (PTVL…LKAA), and 298–392 (LEPL…ARLT). The next 6 membrane-spanning stretches (helical) occupy residues 115 to 135 (IIGA…LLPL), 167 to 187 (ILGF…SSAV), 208 to 228 (VLIP…IMVP), 262 to 282 (AGYS…YSSF), 303 to 323 (SVCC…PLDV), and 365 to 385 (TRGM…GYFA).

It belongs to the mitochondrial carrier (TC 2.A.29) family. As to expression, expressed in leaves, developing flowers and siliques.

Its subcellular location is the plastid. It is found in the chloroplast inner membrane. In terms of biological role, probably involved in iron transport into chloroplasts. This is Protein MITOFERRINLIKE 1, chloroplastic (MFL1) from Arabidopsis thaliana (Mouse-ear cress).